A 142-amino-acid chain; its full sequence is Ribosome-binding factor A (142 aa).

Belongs to the RbfA family. In terms of assembly, monomer. Binds 30S ribosomal subunits, but not 50S ribosomal subunits or 70S ribosomes.

It is found in the cytoplasm. In terms of biological role, one of several proteins that assist in the late maturation steps of the functional core of the 30S ribosomal subunit. Associates with free 30S ribosomal subunits (but not with 30S subunits that are part of 70S ribosomes or polysomes). Required for efficient processing of 16S rRNA. May interact with the 5'-terminal helix region of 16S rRNA. This Leifsonia xyli subsp. xyli (strain CTCB07) protein is Ribosome-binding factor A.